The primary structure comprises 34 residues: Photosystem II reaction center protein T (34 aa).

A helical membrane pass occupies residues 3–23 (SVAYILIFTLTIGTLFFAVAF).

It belongs to the PsbT family. As to quaternary structure, PSII is composed of 1 copy each of membrane proteins PsbA, PsbB, PsbC, PsbD, PsbE, PsbF, PsbH, PsbI, PsbJ, PsbK, PsbL, PsbM, PsbT, PsbX, PsbY, PsbZ, Psb30/Ycf12, peripheral proteins PsbO, CyanoQ (PsbQ), PsbU, PsbV and a large number of cofactors. It forms dimeric complexes.

Its subcellular location is the cellular thylakoid membrane. Functionally, found at the monomer-monomer interface of the photosystem II (PS II) dimer, plays a role in assembly and dimerization of PSII. PSII is a light-driven water plastoquinone oxidoreductase, using light energy to abstract electrons from H(2)O, generating a proton gradient subsequently used for ATP formation. This chain is Photosystem II reaction center protein T, found in Mastigocladus laminosus (Fischerella sp.).